Consider the following 277-residue polypeptide: Large ribosomal subunit protein uL2 (277 aa).

The segment at 219 to 277 (TVRGSVMNPNDHPHGGGEGRSPIGHPSPRTPWGKPALGYKTRKNKKYSDRFIVKRRHDK) is disordered.

The protein belongs to the universal ribosomal protein uL2 family. Part of the 50S ribosomal subunit. Forms a bridge to the 30S subunit in the 70S ribosome.

Its function is as follows. One of the primary rRNA binding proteins. Required for association of the 30S and 50S subunits to form the 70S ribosome, for tRNA binding and peptide bond formation. It has been suggested to have peptidyltransferase activity; this is somewhat controversial. Makes several contacts with the 16S rRNA in the 70S ribosome. The sequence is that of Large ribosomal subunit protein uL2 from Clostridium botulinum (strain ATCC 19397 / Type A).